The chain runs to 717 residues: F-box only protein 42 (717 aa).

Positions 1-30 are enriched in acidic residues; that stretch reads MASSSDSEDDSFMAVDQEETVLEGTMEQDE. Positions 1-47 are disordered; it reads MASSSDSEDDSFMAVDQEETVLEGTMEQDEEPHPVLEAEETRHNRSM. Residues 31 to 43 show a composition bias toward basic and acidic residues; it reads EPHPVLEAEETRH. An F-box domain is found at 44–93; that stretch reads NRSMSELPEEVLEYILSFLSPYQEHKTAALVCKQWYRLIKGVAHQCYHGF. Kelch repeat units lie at residues 132 to 184, 186 to 242, 244 to 293, and 295 to 342; these read SMYV…VYKD, LVLF…VIDD, MIVF…VIDD, and TILI…LWCH. 2 disordered regions span residues 361–472 and 508–539; these read RAPL…SAAE and PASS…GVHT. A compositionally biased stretch (low complexity) spans 363 to 376; the sequence is PLSPSLNSRPSPIS. 2 positions are modified to phosphoserine: Ser365 and Ser373. Thr378 carries the phosphothreonine modification. Composition is skewed to polar residues over residues 416-426 and 455-469; these read QRQTPSGSREG and SLDS…STPS. Ser552 carries the post-translational modification Phosphoserine. The span at 570–596 shows a compositional bias: low complexity; the sequence is GPSASAALSPPLGSSPGSPGSQSLSSG. A disordered region spans residues 570–635; it reads GPSASAALSP…PQSLNVGKPL (66 aa).

As to quaternary structure, component of some SCF complex, composed of CUL1, SKP1, RBX1 and FBXO42. Interacts (via the kelch domain) with p53/TP53; interaction is direct.

Its function is as follows. Substrate-recognition component of some SCF (SKP1-CUL1-F-box protein)-type E3 ubiquitin ligase complex. Specifically recognizes p53/TP53, promoting its ubiquitination and degradation. The sequence is that of F-box only protein 42 (FBXO42) from Pongo abelii (Sumatran orangutan).